A 474-amino-acid chain; its full sequence is L-arabinose isomerase (474 aa).

Mn(2+)-binding residues include Glu-306, Glu-331, His-348, and His-447.

This sequence belongs to the arabinose isomerase family. Mn(2+) is required as a cofactor.

It catalyses the reaction beta-L-arabinopyranose = L-ribulose. Its pathway is carbohydrate degradation; L-arabinose degradation via L-ribulose; D-xylulose 5-phosphate from L-arabinose (bacterial route): step 1/3. Functionally, catalyzes the conversion of L-arabinose to L-ribulose. In Levilactobacillus brevis (strain ATCC 367 / BCRC 12310 / CIP 105137 / JCM 1170 / LMG 11437 / NCIMB 947 / NCTC 947) (Lactobacillus brevis), this protein is L-arabinose isomerase.